The chain runs to 143 residues: Anti-sigma F factor (143 aa).

The protein belongs to the anti-sigma-factor family.

The catalysed reaction is L-seryl-[protein] + ATP = O-phospho-L-seryl-[protein] + ADP + H(+). It carries out the reaction L-threonyl-[protein] + ATP = O-phospho-L-threonyl-[protein] + ADP + H(+). Its function is as follows. Binds to sigma F and blocks its ability to form an RNA polymerase holoenzyme (E-sigma F). Phosphorylates SpoIIAA on a serine residue. This phosphorylation may enable SpoIIAA to act as an anti-anti-sigma factor that counteracts SpoIIAB and thus releases sigma F from inhibition. The sequence is that of Anti-sigma F factor from Clostridium botulinum (strain Alaska E43 / Type E3).